The chain runs to 711 residues: C6 finger domain transcription factor nscR (711 aa).

The zn(2)-C6 fungal-type DNA-binding region spans 17–43 (CELCRERKVKCDKLDPCTNCSSAGVIC). Residues 372-394 (SPPKHINDSDFDPTTSHDVPDRE) form a disordered region.

Its subcellular location is the nucleus. Transcription factor that specifically regulates the neosartoricin B biosynthesis gene cluster. The protein is C6 finger domain transcription factor nscR of Trichophyton tonsurans (strain CBS 112818) (Scalp ringworm fungus).